The primary structure comprises 224 residues: Uracil phosphoribosyltransferase (224 aa).

Residue Arg92 participates in 5-phospho-alpha-D-ribose 1-diphosphate binding. Position 109 (Lys109) interacts with GTP. Residues Arg117 and 145 to 153 (DPMLATGGT) contribute to the 5-phospho-alpha-D-ribose 1-diphosphate site. Uracil contacts are provided by residues Ile210 and 215–217 (GDA). Asp216 serves as a coordination point for 5-phospho-alpha-D-ribose 1-diphosphate.

The protein belongs to the UPRTase family. Mg(2+) is required as a cofactor.

The catalysed reaction is UMP + diphosphate = 5-phospho-alpha-D-ribose 1-diphosphate + uracil. The protein operates within pyrimidine metabolism; UMP biosynthesis via salvage pathway; UMP from uracil: step 1/1. With respect to regulation, allosterically activated by GTP. Functionally, catalyzes the conversion of uracil and 5-phospho-alpha-D-ribose 1-diphosphate (PRPP) to UMP and diphosphate. This is Uracil phosphoribosyltransferase (UPP) from Nicotiana tabacum (Common tobacco).